Reading from the N-terminus, the 142-residue chain is 3-hydroxyacyl-[acyl-carrier-protein] dehydratase FabZ (142 aa).

Residue H48 is part of the active site.

This sequence belongs to the thioester dehydratase family. FabZ subfamily.

The protein resides in the cytoplasm. It carries out the reaction a (3R)-hydroxyacyl-[ACP] = a (2E)-enoyl-[ACP] + H2O. In terms of biological role, involved in unsaturated fatty acids biosynthesis. Catalyzes the dehydration of short chain beta-hydroxyacyl-ACPs and long chain saturated and unsaturated beta-hydroxyacyl-ACPs. In Clostridioides difficile (strain 630) (Peptoclostridium difficile), this protein is 3-hydroxyacyl-[acyl-carrier-protein] dehydratase FabZ.